The chain runs to 930 residues: Polypeptide N-acetylgalactosaminyltransferase 5 (930 aa).

At 1–12 (MNKIRKFFRGSG) the chain is on the cytoplasmic side. The chain crosses the membrane as a helical; Signal-anchor for type II membrane protein span at residues 13–35 (RVLAFIFVASVIWLLFDMAALRL). At 36–930 (SFSEINTGIL…KWKFEKYYDV (895 aa)) the chain is on the lumenal side. The tract at residues 163 to 210 (GSEKDSFTVSRGVPLNKTAEHTETLDKKQEAPENYNLSSDTSKQASQR) is disordered. N178 carries an N-linked (GlcNAc...) asparagine glycan. A compositionally biased stretch (basic and acidic residues) spans 180–193 (TAEHTETLDKKQEA). Residues 197–210 (YNLSSDTSKQASQR) show a composition bias toward polar residues. N198 and N213 each carry an N-linked (GlcNAc...) asparagine glycan. Residue S285 is modified to Phosphoserine. N-linked (GlcNAc...) asparagine glycosylation is found at N287 and N309. The segment at 344 to 377 (LGESQGKHIPRSQSQTLSSPLAPKRAVSQSKPTL) is disordered. 2 N-linked (GlcNAc...) asparagine glycosylation sites follow: N387 and N403. 3 cysteine pairs are disulfide-bonded: C476–C708, C699–C779, and C812–C825. Positions 485 to 594 (LPTTSIIMCF…VGWLEPLLER (110 aa)) are catalytic subdomain A. 2 residues coordinate substrate: D526 and R555. N568 carries N-linked (GlcNAc...) asparagine glycosylation. D578 is a Mn(2+) binding site. A substrate-binding site is contributed by S579. H580 is a Mn(2+) binding site. Residues 654–716 (IIRCPVMAGG…PCSRVGHIFR (63 aa)) form a catalytic subdomain B region. W685 lines the substrate pocket. Residue H713 participates in Mn(2+) binding. Residues R716 and Y721 each coordinate substrate. Residues N766, N817, and N835 are each glycosylated (N-linked (GlcNAc...) asparagine). The region spanning 794-925 (KAPVVRASGV…TEPQQKWKFE (132 aa)) is the Ricin B-type lectin domain. Disulfide bonds link C848/C863 and C898/C913. The N-linked (GlcNAc...) asparagine glycan is linked to N902.

This sequence belongs to the glycosyltransferase 2 family. GalNAc-T subfamily. Interacts with EXT2. Does not interact with EXT1, EXTL1 or EXTL3. The cofactor is Mn(2+). In terms of tissue distribution, predominantly expressed in sublingual gland. Expressed at lower level in stomach and small intestine. Weakly or not expressed in submandibular gland, parotid gland, kidney, liver, heart, brain, spleen, lung, skeletal muscle, testis, ovary, cervix and uterus.

It is found in the golgi apparatus membrane. The catalysed reaction is L-seryl-[protein] + UDP-N-acetyl-alpha-D-galactosamine = a 3-O-[N-acetyl-alpha-D-galactosaminyl]-L-seryl-[protein] + UDP + H(+). It carries out the reaction L-threonyl-[protein] + UDP-N-acetyl-alpha-D-galactosamine = a 3-O-[N-acetyl-alpha-D-galactosaminyl]-L-threonyl-[protein] + UDP + H(+). Its pathway is protein modification; protein glycosylation. Catalyzes the initial reaction in O-linked oligosaccharide biosynthesis, the transfer of an N-acetyl-D-galactosamine residue to a serine or threonine residue on the protein receptor. Has activity toward EA2 peptide substrate, but has a weak activity toward Muc2, Muc1b, rMuc-2 or mG-Muc substrates. This chain is Polypeptide N-acetylgalactosaminyltransferase 5 (Galnt5), found in Rattus norvegicus (Rat).